Reading from the N-terminus, the 223-residue chain is Endonuclease V (223 aa).

Positions 35 and 103 each coordinate Mg(2+).

It belongs to the endonuclease V family. Mg(2+) is required as a cofactor.

The protein resides in the cytoplasm. It carries out the reaction Endonucleolytic cleavage at apurinic or apyrimidinic sites to products with a 5'-phosphate.. Functionally, DNA repair enzyme involved in the repair of deaminated bases. Selectively cleaves double-stranded DNA at the second phosphodiester bond 3' to a deoxyinosine leaving behind the intact lesion on the nicked DNA. This chain is Endonuclease V, found in Salmonella paratyphi A (strain ATCC 9150 / SARB42).